Here is a 78-residue protein sequence, read N- to C-terminus: MAPLPGAELVQTPLQLYRYLLRCCRQLPTKGIQEHYKHAVRQSFQVHSDEDNSERIQQIIKRAIEDADWIMNKYRKQN.

It belongs to the complex I LYR family. LYRM9 subfamily.

In Mus musculus (Mouse), this protein is LYR motif-containing protein 9 (Lyrm9).